Here is a 279-residue protein sequence, read N- to C-terminus: Acetyl-coenzyme A carboxylase carboxyl transferase subunit beta (279 aa).

In terms of domain architecture, CoA carboxyltransferase N-terminal spans L23–V279. Zn(2+) is bound by residues C27, C30, C46, and C49. Residues C27 to C49 form a C4-type zinc finger.

Belongs to the AccD/PCCB family. As to quaternary structure, acetyl-CoA carboxylase is a heterohexamer composed of biotin carboxyl carrier protein (AccB), biotin carboxylase (AccC) and two subunits each of ACCase subunit alpha (AccA) and ACCase subunit beta (AccD). Zn(2+) is required as a cofactor.

The protein resides in the cytoplasm. It catalyses the reaction N(6)-carboxybiotinyl-L-lysyl-[protein] + acetyl-CoA = N(6)-biotinyl-L-lysyl-[protein] + malonyl-CoA. Its pathway is lipid metabolism; malonyl-CoA biosynthesis; malonyl-CoA from acetyl-CoA: step 1/1. In terms of biological role, component of the acetyl coenzyme A carboxylase (ACC) complex. Biotin carboxylase (BC) catalyzes the carboxylation of biotin on its carrier protein (BCCP) and then the CO(2) group is transferred by the transcarboxylase to acetyl-CoA to form malonyl-CoA. The sequence is that of Acetyl-coenzyme A carboxylase carboxyl transferase subunit beta from Pelodictyon phaeoclathratiforme (strain DSM 5477 / BU-1).